A 242-amino-acid polypeptide reads, in one-letter code: Segregation and condensation protein A (242 aa).

It belongs to the ScpA family. In terms of assembly, component of a cohesin-like complex composed of ScpA, ScpB and the Smc homodimer, in which ScpA and ScpB bind to the head domain of Smc. The presence of the three proteins is required for the association of the complex with DNA.

Its subcellular location is the cytoplasm. In terms of biological role, participates in chromosomal partition during cell division. May act via the formation of a condensin-like complex containing Smc and ScpB that pull DNA away from mid-cell into both cell halves. In Streptococcus pneumoniae serotype 4 (strain ATCC BAA-334 / TIGR4), this protein is Segregation and condensation protein A.